The sequence spans 337 residues: Glycerol-3-phosphate dehydrogenase [NAD(P)+] (337 aa).

Positions 11, 30, and 113 each coordinate NADPH. Residues Lys-113, Gly-141, and Ser-143 each coordinate sn-glycerol 3-phosphate. Ala-145 contacts NADPH. 5 residues coordinate sn-glycerol 3-phosphate: Lys-196, Asp-249, Ser-259, Arg-260, and Asn-261. Residue Lys-196 is the Proton acceptor of the active site. NADPH is bound at residue Arg-260. NADPH is bound by residues Val-284 and Glu-286.

This sequence belongs to the NAD-dependent glycerol-3-phosphate dehydrogenase family.

The protein localises to the cytoplasm. It catalyses the reaction sn-glycerol 3-phosphate + NAD(+) = dihydroxyacetone phosphate + NADH + H(+). It carries out the reaction sn-glycerol 3-phosphate + NADP(+) = dihydroxyacetone phosphate + NADPH + H(+). It participates in membrane lipid metabolism; glycerophospholipid metabolism. Its function is as follows. Catalyzes the reduction of the glycolytic intermediate dihydroxyacetone phosphate (DHAP) to sn-glycerol 3-phosphate (G3P), the key precursor for phospholipid synthesis. This Leptothrix cholodnii (strain ATCC 51168 / LMG 8142 / SP-6) (Leptothrix discophora (strain SP-6)) protein is Glycerol-3-phosphate dehydrogenase [NAD(P)+].